Here is a 141-residue protein sequence, read N- to C-terminus: MRQRTIVCPLIQNDGAYLLCKMADDRGVFPGQWALSGGGVEPGERIEEALRREIREELGEQLLLTEITPWTFSDDIRTKTYADGRKEEIYMIYLIFDCVSANRDVKINEEFQDYAWVKPEDLVHYDLNVATRKTLRLKGLL.

Residues 1 to 141 (MRQRTIVCPL…RKTLRLKGLL (141 aa)) form the Nudix hydrolase domain. The short motif at 38–59 (GGVEPGERIEEALRREIREELG) is the Nudix box element.

It belongs to the Nudix hydrolase family. NudI subfamily. As to quaternary structure, monomer. The cofactor is Mg(2+).

The catalysed reaction is a ribonucleoside 5'-triphosphate + H2O = a ribonucleoside 5'-phosphate + diphosphate + H(+). It carries out the reaction a 2'-deoxyribonucleoside 5'-triphosphate + H2O = a 2'-deoxyribonucleoside 5'-phosphate + diphosphate + H(+). The enzyme catalyses dUTP + H2O = dUMP + diphosphate + H(+). It catalyses the reaction dTTP + H2O = dTMP + diphosphate + H(+). The catalysed reaction is dCTP + H2O = dCMP + diphosphate + H(+). In terms of biological role, catalyzes the hydrolysis of nucleoside triphosphates, with a preference for pyrimidine deoxynucleoside triphosphates (dUTP, dTTP and dCTP). In Escherichia coli O6:K15:H31 (strain 536 / UPEC), this protein is Nucleoside triphosphatase NudI.